A 409-amino-acid chain; its full sequence is uncharacterized protein (409 aa).

Helical transmembrane passes span 53–73 (IITL…YVHC), 83–103 (WCYF…NVDG), 115–135 (LGEL…AIVM), 141–161 (IGPY…YLAH), 183–203 (VLFM…WTYG), 205–225 (STTV…VTCL), 243–263 (CLLQ…WASV), 265–285 (NLIT…FGYI), 299–319 (CSLF…SILA), and 329–349 (TVAL…FSYF). A compositionally biased stretch (polar residues) spans 388-401 (EEGSSSIGNSTDDI). The tract at residues 388–409 (EEGSSSIGNSTDDINPSEIEEI) is disordered.

Belongs to the CDP-alcohol phosphatidyltransferase class-I family.

Its subcellular location is the membrane. This is an uncharacterized protein from Dictyostelium discoideum (Social amoeba).